A 417-amino-acid polypeptide reads, in one-letter code: NADH-quinone oxidoreductase subunit D (417 aa).

Belongs to the complex I 49 kDa subunit family. NDH-1 is composed of 14 different subunits. Subunits NuoB, C, D, E, F, and G constitute the peripheral sector of the complex.

The protein localises to the cell inner membrane. The enzyme catalyses a quinone + NADH + 5 H(+)(in) = a quinol + NAD(+) + 4 H(+)(out). In terms of biological role, NDH-1 shuttles electrons from NADH, via FMN and iron-sulfur (Fe-S) centers, to quinones in the respiratory chain. The immediate electron acceptor for the enzyme in this species is believed to be ubiquinone. Couples the redox reaction to proton translocation (for every two electrons transferred, four hydrogen ions are translocated across the cytoplasmic membrane), and thus conserves the redox energy in a proton gradient. The protein is NADH-quinone oxidoreductase subunit D of Paraburkholderia phytofirmans (strain DSM 17436 / LMG 22146 / PsJN) (Burkholderia phytofirmans).